The primary structure comprises 251 residues: Probable transcriptional regulatory protein MLBr00475 (251 aa).

The protein belongs to the TACO1 family.

The protein localises to the cytoplasm. The chain is Probable transcriptional regulatory protein MLBr00475 from Mycobacterium leprae (strain Br4923).